The sequence spans 370 residues: Capsular polysaccharide phosphotransferase (370 aa).

It belongs to the stealth family.

Its function is as follows. Part of a capsular polysaccharide synthesis locus. This Actinobacillus suis protein is Capsular polysaccharide phosphotransferase.